Reading from the N-terminus, the 710-residue chain is Homeobox-leucine zipper protein ROC8 (710 aa).

Residues M1 to T23 form a disordered region. The segment covering R14–T23 has biased composition (basic residues). A DNA-binding region (homeobox) is located at residues R15–H74. Residues L82–Y144 are a coiled coil. The START domain maps to S197–S440. Positions R630 to A648 are enriched in low complexity. The interval R630–G650 is disordered.

It belongs to the HD-ZIP homeobox family. Class IV subfamily.

Its subcellular location is the nucleus. Its function is as follows. Probable transcription factor. This chain is Homeobox-leucine zipper protein ROC8 (ROC8), found in Oryza sativa subsp. japonica (Rice).